Here is a 440-residue protein sequence, read N- to C-terminus: Chromosomal replication initiator protein DnaA (440 aa).

A domain I, interacts with DnaA modulators region spans residues 1-75; it reads MNPNQILENL…QSGNKASVLI (75 aa). The interval 75–99 is domain II; the sequence is IQAQSAKQSSKSTKIDIAHIKAQST. The domain III, AAA+ region stretch occupies residues 100–316; that stretch reads ILNPSFTFES…GIIISLNAYA (217 aa). Positions 146, 148, 149, and 150 each coordinate ATP. Residues 317–440 form a domain IV, binds dsDNA region; sequence TILGQEITLE…KNKILVKSQS (124 aa).

The protein belongs to the DnaA family. Oligomerizes as a right-handed, spiral filament on DNA at oriC.

It is found in the cytoplasm. Its function is as follows. Plays an essential role in the initiation and regulation of chromosomal replication. ATP-DnaA binds to the origin of replication (oriC) to initiate formation of the DNA replication initiation complex once per cell cycle. Binds the DnaA box (a 9 base pair repeat at the origin) and separates the double-stranded (ds)DNA. Forms a right-handed helical filament on oriC DNA; dsDNA binds to the exterior of the filament while single-stranded (ss)DNA is stabiized in the filament's interior. The ATP-DnaA-oriC complex binds and stabilizes one strand of the AT-rich DNA unwinding element (DUE), permitting loading of DNA polymerase. After initiation quickly degrades to an ADP-DnaA complex that is not apt for DNA replication. Binds acidic phospholipids. The polypeptide is Chromosomal replication initiator protein DnaA (Campylobacter jejuni subsp. jejuni serotype O:6 (strain 81116 / NCTC 11828)).